The following is a 501-amino-acid chain: Glycerol kinase (501 aa).

Thr-16 lines the ADP pocket. Residues Thr-16, Thr-17, and Ser-18 each coordinate ATP. Thr-16 provides a ligand contact to sn-glycerol 3-phosphate. Arg-20 is an ADP binding site. 4 residues coordinate sn-glycerol 3-phosphate: Arg-84, Glu-85, Tyr-135, and Asp-242. Residues Arg-84, Glu-85, Tyr-135, Asp-242, and Gln-243 each coordinate glycerol. Thr-264 and Gly-307 together coordinate ADP. ATP is bound by residues Thr-264, Gly-307, Gln-311, and Gly-408. Gly-408 contributes to the ADP binding site.

This sequence belongs to the FGGY kinase family.

It catalyses the reaction glycerol + ATP = sn-glycerol 3-phosphate + ADP + H(+). It functions in the pathway polyol metabolism; glycerol degradation via glycerol kinase pathway; sn-glycerol 3-phosphate from glycerol: step 1/1. Its function is as follows. Key enzyme in the regulation of glycerol uptake and metabolism. Catalyzes the phosphorylation of glycerol to yield sn-glycerol 3-phosphate. The chain is Glycerol kinase from Saccharolobus islandicus (strain M.16.27) (Sulfolobus islandicus).